Consider the following 473-residue polypeptide: Photosystem II CP43 reaction center protein (473 aa).

Positions 1–14 (MKNLYSLRRFYHVE) are excised as a propeptide. The residue at position 15 (Thr-15) is an N-acetylthreonine. Thr-15 is subject to Phosphothreonine. A run of 5 helical transmembrane segments spans residues 69 to 93 (LFEVAHFVPEKPMYEQGLILLPHLA), 134 to 155 (LIGPETLEESFPFFGYVWKDKN), 178 to 200 (KARYLGGVYDTWAPGGGDVRVIT), 255 to 275 (KPFGWARRAFVWSGEAYLSYS), and 291 to 312 (WFNNTVYPSEFYGPTGPEASQA). A [CaMn4O5] cluster-binding site is contributed by Glu-367. A helical membrane pass occupies residues 447–471 (RARAAAAGFEKGIDRDTEPTLFMRP).

This sequence belongs to the PsbB/PsbC family. PsbC subfamily. In terms of assembly, PSII is composed of 1 copy each of membrane proteins PsbA, PsbB, PsbC, PsbD, PsbE, PsbF, PsbH, PsbI, PsbJ, PsbK, PsbL, PsbM, PsbT, PsbX, PsbY, PsbZ, Psb30/Ycf12, at least 3 peripheral proteins of the oxygen-evolving complex and a large number of cofactors. It forms dimeric complexes. Binds multiple chlorophylls and provides some of the ligands for the Ca-4Mn-5O cluster of the oxygen-evolving complex. It may also provide a ligand for a Cl- that is required for oxygen evolution. PSII binds additional chlorophylls, carotenoids and specific lipids. is required as a cofactor.

It localises to the plastid. The protein resides in the chloroplast thylakoid membrane. Functionally, one of the components of the core complex of photosystem II (PSII). It binds chlorophyll and helps catalyze the primary light-induced photochemical processes of PSII. PSII is a light-driven water:plastoquinone oxidoreductase, using light energy to abstract electrons from H(2)O, generating O(2) and a proton gradient subsequently used for ATP formation. The protein is Photosystem II CP43 reaction center protein of Nephroselmis olivacea (Green alga).